Here is a 393-residue protein sequence, read N- to C-terminus: Glycocyamine kinase (393 aa).

The Phosphagen kinase N-terminal domain occupies 7–94 (REKFAKENFP…FDRVIEEIHH (88 aa)). Positions 120 to 362 (YVKSCRIRCG…NVLIEADKRL (243 aa)) constitute a Phosphagen kinase C-terminal domain. Residues 123 to 127 (SCRIR), His186, Arg231, 287 to 291 (RASVH), 315 to 320 (RGTGGE), and Asp330 each bind ATP. The tract at residues 367–393 (PIDDLTPRLNSSTGTSISATASRHMTL) is disordered. Residues 377-393 (SSTGTSISATASRHMTL) are compositionally biased toward low complexity.

The protein belongs to the ATP:guanido phosphotransferase family. As to quaternary structure, monomer.

The catalysed reaction is guanidinoacetate + ATP = phosphoguanidinoacetate + ADP + H(+). The protein is Glycocyamine kinase of Hediste diversicolor (Sandworm).